The chain runs to 648 residues: Replication protein E1 (648 aa).

A Nuclear localization signal motif is present at residues 83 to 85 (KRK). 3 positions are modified to phosphoserine; by host: S89, S93, and S107. The Nuclear export signal signature appears at 106-115 (ISPRLNAIQL). The disordered stretch occupies residues 153-188 (HGEPENGCGGGGHGRDKEGEGQVHTEVHTESEIEHH). Over residues 165–188 (HGRDKEGEGQVHTEVHTESEIEHH) the composition is skewed to basic and acidic residues. Positions 186–352 (EHHTGTTRVL…QTIVEHGLAD (167 aa)) are DNA-binding region. An SF3 helicase domain is found at 451-601 (IEFISFLSKL…FPFDRNGNAV (151 aa)). 477–484 (GPPDTGKS) contacts ATP. Residue K558 forms a Glycyl lysine isopeptide (Lys-Gly) (interchain with G-Cter in SUMO) linkage.

It belongs to the papillomaviridae E1 protein family. Can form hexamers. Interacts with E2 protein; this interaction increases E1 DNA binding specificity. Interacts with host DNA polymerase subunit POLA2. Interacts with host single stranded DNA-binding protein RPA1. Interacts with host TOP1; this interaction stimulates the enzymatic activity of TOP1. In terms of processing, phosphorylated. Post-translationally, sumoylated.

The protein localises to the host nucleus. The enzyme catalyses Couples ATP hydrolysis with the unwinding of duplex DNA by translocating in the 3'-5' direction.. It carries out the reaction ATP + H2O = ADP + phosphate + H(+). Its function is as follows. ATP-dependent DNA 3'-5' helicase required for initiation of viral DNA replication. It forms a complex with the viral E2 protein. The E1-E2 complex binds to the replication origin which contains binding sites for both proteins. During the initial step, a dimer of E1 interacts with a dimer of protein E2 leading to a complex that binds the viral origin of replication with high specificity. Then, a second dimer of E1 displaces the E2 dimer in an ATP-dependent manner to form the E1 tetramer. Following this, two E1 monomers are added to each half of the site, which results in the formation of two E1 trimers on the viral ori. Subsequently, two hexamers will be created. The double hexamer acts as a bi-directional helicase machinery and unwinds the viral DNA and then recruits the host DNA polymerase to start replication. This is Replication protein E1 from Pan paniscus (Pygmy chimpanzee).